We begin with the raw amino-acid sequence, 944 residues long: Translation initiation factor IF-2 (944 aa).

2 disordered regions span residues 61–157 and 173–281; these read IQAN…KAKQ and TQSN…SHKI. Polar residues predominate over residues 132–150; sequence TFENQTPPTENTPKVVSHS. The span at 175 to 185 shows a compositional bias: low complexity; it reads SNANNASNANN. The span at 186 to 203 shows a compositional bias: basic and acidic residues; that stretch reads AKKEISEVKKQEQEIKRH. Residues 204–215 are compositionally biased toward basic residues; the sequence is ENIKRRTGFRVI. A compositionally biased stretch (basic and acidic residues) spans 244–259; sequence EDIKKEWQEKDKQEAK. The tr-type G domain maps to 443 to 612; that stretch reads ERPPVVTIMG…LIQAGIMELK (170 aa). Residues 452 to 459 are G1; that stretch reads GHVDHGKT. 452-459 is a GTP binding site; the sequence is GHVDHGKT. The interval 477–481 is G2; it reads GITQH. Positions 498 to 501 are G3; it reads DTPG. GTP-binding positions include 498-502 and 552-555; these read DTPGH and NKMD. The tract at residues 552-555 is G4; it reads NKMD. Positions 588–590 are G5; the sequence is SAK.

This sequence belongs to the TRAFAC class translation factor GTPase superfamily. Classic translation factor GTPase family. IF-2 subfamily.

The protein resides in the cytoplasm. One of the essential components for the initiation of protein synthesis. Protects formylmethionyl-tRNA from spontaneous hydrolysis and promotes its binding to the 30S ribosomal subunits. Also involved in the hydrolysis of GTP during the formation of the 70S ribosomal complex. The sequence is that of Translation initiation factor IF-2 (infB) from Helicobacter pylori (strain ATCC 700392 / 26695) (Campylobacter pylori).